The chain runs to 192 residues: MIDVPHEVIEKLQIFQDLVQKWNKAINLISENSTQNFWKRHILDSLQLIQYINDKEIHLVDIGSGAGFPGIILSIAGVASTSLIEADLRKCIFLEKAAKISNNNIQIINQRIEKTEISCNILTCRAFSNLNTIFDCTKNISVQNKFLLPKGKSYLSEIKEARKKWLFKCLINQSITSKESKILEISDLTKII.

Residues glycine 63, phenylalanine 68, 112–113, and arginine 125 each bind S-adenosyl-L-methionine; that span reads IE.

The protein belongs to the methyltransferase superfamily. RNA methyltransferase RsmG family.

The protein resides in the cytoplasm. It catalyses the reaction guanosine(527) in 16S rRNA + S-adenosyl-L-methionine = N(7)-methylguanosine(527) in 16S rRNA + S-adenosyl-L-homocysteine. Specifically methylates the N7 position of guanine in position 527 of 16S rRNA. The sequence is that of Ribosomal RNA small subunit methyltransferase G from Rickettsia bellii (strain OSU 85-389).